The primary structure comprises 294 residues: Polyketide transferase grgF (294 aa).

Residues Cys115, Asp240, and His269 contribute to the active site.

It belongs to the polyketide transferase af380 family. Homodimer.

It participates in secondary metabolite biosynthesis. Its function is as follows. Polyketide transferase; part of the gene cluster that mediates the biosynthesis of gregatin A, a fungal polyketide featuring an alkylated furanone core. The PKS grgA synthesizes C11 and C4 polyketide chains in the presence and absence of the trans-enoyl reductase grgB, respectively. The polyketide transferase grgF is then responsible for the fusion of the two carbon chains to produce the furanone skeleton of gregatin A. GrgF first undergoes a conformational change to an open form, and the active site Cys-115 is acylated by the C11 chain. After the elimination of the phosphopantetheinyl chain, the second polyketide chain of four carbons long is delivered adjacent to the enzyme-bound C11 chain. The catalytic histidine, His-269, deprotonates a proton from C-2 of the long chain, and the resultant carbanion attacks the C-1 carbonyl of the crotonyl group to perform Claisen condensation, by which the phosphopantetheinyl chain is released. Eventually, hydrolysis of the thioester linkage probably by a His-269-activated water molecule completes the reaction to afford the grgF final product. Next, the cytochrome P450 monooxygenase grgG accepts the unstable grgF final product as substrate and performs the oxidative cyclization to furnish the gregatin scaffold and leads to the formation of desmethylgregatin A. Finally, the O-methyltransferase grgD methylates the carboxyl group of desmethylgregatin A to provide gregatin A. The sequence is that of Polyketide transferase grgF from Penicillium sp.